The chain runs to 316 residues: N-acetylmuramic acid 6-phosphate etherase (316 aa).

The segment at 1-24 is disordered; that stretch reads MTRFQSDAAVSADRGHLMTEQPNP. The SIS domain occupies 66-229; it reads IASRLKDGGR…STAVMVRLGK (164 aa). Glutamate 94 serves as the catalytic Proton donor. Residue glutamate 125 is part of the active site.

The protein belongs to the GCKR-like family. MurNAc-6-P etherase subfamily. In terms of assembly, homodimer.

It catalyses the reaction N-acetyl-D-muramate 6-phosphate + H2O = N-acetyl-D-glucosamine 6-phosphate + (R)-lactate. The protein operates within amino-sugar metabolism; N-acetylmuramate degradation. Functionally, specifically catalyzes the cleavage of the D-lactyl ether substituent of MurNAc 6-phosphate, producing GlcNAc 6-phosphate and D-lactate. The chain is N-acetylmuramic acid 6-phosphate etherase from Parasynechococcus marenigrum (strain WH8102).